We begin with the raw amino-acid sequence, 204 residues long: 3,4-dihydroxy-2-butanone 4-phosphate synthase (204 aa).

Glutamate 27 contacts Mg(2+). Aspartate 31 is a binding site for D-ribulose 5-phosphate. The residue at position 56 (cysteine 56) is an S-glutathionyl cysteine. Residues threonine 82 and 140 to 144 each bind D-ribulose 5-phosphate; that span reads RDGHT. Residue histidine 143 coordinates Mg(2+).

The protein belongs to the DHBP synthase family. Homodimer. Mg(2+) is required as a cofactor. Requires Mn(2+) as cofactor. Post-translationally, S-glutathionylation is reversible and dependent on a glutaredoxin.

It carries out the reaction D-ribulose 5-phosphate = (2S)-2-hydroxy-3-oxobutyl phosphate + formate + H(+). Its pathway is cofactor biosynthesis; riboflavin biosynthesis; 2-hydroxy-3-oxobutyl phosphate from D-ribulose 5-phosphate: step 1/1. Catalyzes the conversion of D-ribulose 5-phosphate to formate and 3,4-dihydroxy-2-butanone 4-phosphate. The chain is 3,4-dihydroxy-2-butanone 4-phosphate synthase from Schizosaccharomyces pombe (strain 972 / ATCC 24843) (Fission yeast).